A 227-amino-acid chain; its full sequence is Orotate phosphoribosyltransferase 2 (227 aa).

41 to 42 (FF) serves as a coordination point for orotate. 5-phospho-alpha-D-ribose 1-diphosphate is bound by residues 79-80 (YK), R109, K110, K113, H115, and 135-143 (DDVMTAGTA). Positions 139 and 167 each coordinate orotate.

Belongs to the purine/pyrimidine phosphoribosyltransferase family. PyrE subfamily. As to quaternary structure, homodimer.

It carries out the reaction orotidine 5'-phosphate + diphosphate = orotate + 5-phospho-alpha-D-ribose 1-diphosphate. It functions in the pathway pyrimidine metabolism; UMP biosynthesis via de novo pathway; UMP from orotate: step 1/2. In terms of biological role, catalyzes the transfer of a ribosyl phosphate group from 5-phosphoribose 1-diphosphate to orotate, leading to the formation of orotidine monophosphate (OMP). The chain is Orotate phosphoribosyltransferase 2 (URA10) from Saccharomyces cerevisiae (strain ATCC 204508 / S288c) (Baker's yeast).